We begin with the raw amino-acid sequence, 382 residues long: V-type proton ATPase subunit C 1 (382 aa).

An N-acetylthreonine modification is found at threonine 2.

Belongs to the V-ATPase C subunit family. V-ATPase is a heteromultimeric enzyme made up of two complexes: the ATP-hydrolytic V1 complex and the proton translocation V0 complex. The V1 complex consists of three catalytic AB heterodimers that form a heterohexamer, three peripheral stalks each consisting of EG heterodimers, one central rotor including subunits D and F, and the regulatory subunits C and H. The proton translocation complex V0 consists of the proton transport subunit a, a ring of proteolipid subunits c9c'', rotary subunit d, subunits e and f, and the accessory subunits ATP6AP1/Ac45 and ATP6AP2/PRR. In terms of tissue distribution, expressed in brain (at protein level).

It localises to the cytoplasmic vesicle. The protein localises to the secretory vesicle. It is found in the synaptic vesicle membrane. Its subcellular location is the clathrin-coated vesicle membrane. In terms of biological role, subunit of the V1 complex of vacuolar(H+)-ATPase (V-ATPase), a multisubunit enzyme composed of a peripheral complex (V1) that hydrolyzes ATP and a membrane integral complex (V0) that translocates protons. V-ATPase is responsible for acidifying and maintaining the pH of intracellular compartments and in some cell types, is targeted to the plasma membrane, where it is responsible for acidifying the extracellular environment. Subunit C is necessary for the assembly of the catalytic sector of the enzyme and is likely to have a specific function in its catalytic activity. This is V-type proton ATPase subunit C 1 (Atp6v1c1) from Rattus norvegicus (Rat).